The following is a 367-amino-acid chain: Indole glucosinolate O-methyltransferase 5 (367 aa).

Residues G209, D232, D252, M253, and K266 each coordinate S-adenosyl-L-homocysteine. The active-site Proton acceptor is H270.

It belongs to the class I-like SAM-binding methyltransferase superfamily. Cation-independent O-methyltransferase family.

It functions in the pathway secondary metabolite biosynthesis. Its function is as follows. Involved in indole glucosinolate biosynthesis. Catalyzes methoxylation reactions of the glucosinolate indole ring. Converts the hydroxy intermediates 4-hydroxy-indol-3-yl-methylglucosinolate (4OH-I3M) and 1-hydroxy-indol-3-yl-methylglucosinolate (1OH-I3M) to 4-methoxy-indol-3-yl-methylglucosinolate (4MO-I3M) and 1-methoxy-indol-3-yl-methylglucosinolate, respectively. This is Indole glucosinolate O-methyltransferase 5 from Arabidopsis thaliana (Mouse-ear cress).